The primary structure comprises 326 residues: Peroxidase 46 (326 aa).

The N-terminal stretch at 1 to 27 (MASSYRINCSTLLHLLMFLSSLLTSSA) is a signal peptide. N-linked (GlcNAc...) asparagine glycosylation occurs at asparagine 28. Intrachain disulfides connect cysteine 38-cysteine 114, cysteine 71-cysteine 76, cysteine 120-cysteine 322, and cysteine 199-cysteine 233. The Proton acceptor role is filled by histidine 69. Ca(2+) contacts are provided by aspartate 70, valine 73, glycine 75, aspartate 77, and serine 79. Asparagine 85 carries an N-linked (GlcNAc...) asparagine glycan. Position 192 (histidine 192) interacts with heme b. Residue threonine 193 participates in Ca(2+) binding. The Ca(2+) site is built by aspartate 246, threonine 249, and aspartate 254. Asparagine 278 is a glycosylation site (N-linked (GlcNAc...) asparagine).

It belongs to the peroxidase family. Classical plant (class III) peroxidase subfamily. Heme b is required as a cofactor. Requires Ca(2+) as cofactor.

Its subcellular location is the secreted. It catalyses the reaction 2 a phenolic donor + H2O2 = 2 a phenolic radical donor + 2 H2O. Its function is as follows. Removal of H(2)O(2), oxidation of toxic reductants, biosynthesis and degradation of lignin, suberization, auxin catabolism, response to environmental stresses such as wounding, pathogen attack and oxidative stress. These functions might be dependent on each isozyme/isoform in each plant tissue. The protein is Peroxidase 46 (PER46) of Arabidopsis thaliana (Mouse-ear cress).